A 979-amino-acid polypeptide reads, in one-letter code: Pheromone-regulated membrane protein 10 (979 aa).

5 disordered regions span residues 1–279 (MGKS…FFSK), 295–318 (LRNVNLHPEADPEKNSVQEAEVDG), 337–411 (YSSL…PQRV), 432–451 (FSTASSIGEEPAKPSKPLLD), and 491–528 (ATKHYPGRKNEEASGSNSELPSFKNTRPKKNKKHLPKF). The segment covering 15–26 (GGKDARSPETRS) has biased composition (basic and acidic residues). Over residues 29–38 (SRSSTDNRSS) the composition is skewed to low complexity. Over residues 54-68 (LDLEEGVDDDADFDW) the composition is skewed to acidic residues. The segment covering 77-86 (DAQSLDNPFN) has biased composition (polar residues). Residues 105–115 (AIERDAVDTIR) are compositionally biased toward basic and acidic residues. Residues 122–135 (EEPDSASDGEDVGM) show a composition bias toward acidic residues. Composition is skewed to basic and acidic residues over residues 138–148 (EYQRKRERLVD) and 158–175 (SPRRESREGKNVRFHTET). Residues 192–213 (EAGTGTNENGEASSSGMKSSIN) show a composition bias toward polar residues. Positions 253–263 (GAEKGMKSMKD) are enriched in basic and acidic residues. The segment covering 360-372 (SPSTPSSSPGPES) has biased composition (low complexity). Positions 379–395 (DDYDFDQVDSDGEDSDL) are enriched in acidic residues. Over residues 503–515 (ASGSNSELPSFKN) the composition is skewed to polar residues. Positions 516–528 (TRPKKNKKHLPKF) are enriched in basic residues. 10 helical membrane passes run 658-678 (WVCVLLYGFCSAMVTPYAFGG), 680-700 (WVNLAVSFFIGTCVGALQFIV), 710-730 (VFEISASIVVSFVGRAFGSIG), 734-754 (ICFGAVTQGSLALILPGYIIL), 773-793 (FYAIIYSLFLSFGITLGAALF), 809-829 (PISPWYRFLFVPAFTIGISLI), 832-852 (AHWIQLPVMVTISCTGYVVTY), 864-884 (FTASLAAFVIGIMGNLYSRVW), 886-906 (GLAVSAMLPAIFVQVPSGVAS), and 946-966 (ITMIQVSIGITVGLFGSSLIV).

It belongs to the ThrE exporter (TC 2.A.79) family.

It is found in the membrane. This is Pheromone-regulated membrane protein 10 from Zygosaccharomyces rouxii (strain ATCC 2623 / CBS 732 / NBRC 1130 / NCYC 568 / NRRL Y-229).